The following is a 133-amino-acid chain: MAAKPEWVEQSPEEIEELIVKLHKEGQSTSQIGITLRDQHGIPNTKAVLGEKITDILKRNGTDFEYPEDLLNLIKRAVNIREHLEENPKDIHTKRGLIKIESKIRRLVKYYTRNNVLPEGWRYDPKTAALLVK.

This sequence belongs to the universal ribosomal protein uS15 family. Part of the 30S ribosomal subunit.

The protein is Small ribosomal subunit protein uS15 of Methanosphaera stadtmanae (strain ATCC 43021 / DSM 3091 / JCM 11832 / MCB-3).